Here is a 210-residue protein sequence, read N- to C-terminus: 2-hydroxy-3-keto-5-methylthiopentenyl-1-phosphate phosphatase (210 aa).

It belongs to the HAD-like hydrolase superfamily. MtnX family.

The enzyme catalyses 2-hydroxy-5-methylsulfanyl-3-oxopent-1-enyl phosphate + H2O = 1,2-dihydroxy-5-(methylsulfanyl)pent-1-en-3-one + phosphate. Its pathway is amino-acid biosynthesis; L-methionine biosynthesis via salvage pathway; L-methionine from S-methyl-5-thio-alpha-D-ribose 1-phosphate: step 4/6. In terms of biological role, dephosphorylates 2-hydroxy-3-keto-5-methylthiopentenyl-1-phosphate (HK-MTPenyl-1-P) yielding 1,2-dihydroxy-3-keto-5-methylthiopentene (DHK-MTPene). This chain is 2-hydroxy-3-keto-5-methylthiopentenyl-1-phosphate phosphatase, found in Microcystis aeruginosa (strain NIES-843 / IAM M-2473).